Reading from the N-terminus, the 456-residue chain is tRNA modification GTPase MnmE (456 aa).

3 residues coordinate (6S)-5-formyl-5,6,7,8-tetrahydrofolate: Arg24, Glu81, and Lys120. A TrmE-type G domain is found at 216 to 379; it reads GMTVVIAGRP…LREHLKACMG (164 aa). Asn226 is a binding site for K(+). Residues 226 to 231, 245 to 251, 270 to 273, 335 to 338, and 359 to 361 each bind GTP; these read NAGKSS, TEIAGTT, DTAG, NKAD, and SAR. Ser230 serves as a coordination point for Mg(2+). 3 residues coordinate K(+): Thr245, Ile247, and Thr250. Position 251 (Thr251) interacts with Mg(2+). Lys456 provides a ligand contact to (6S)-5-formyl-5,6,7,8-tetrahydrofolate.

This sequence belongs to the TRAFAC class TrmE-Era-EngA-EngB-Septin-like GTPase superfamily. TrmE GTPase family. Homodimer. Heterotetramer of two MnmE and two MnmG subunits. It depends on K(+) as a cofactor.

It localises to the cytoplasm. In terms of biological role, exhibits a very high intrinsic GTPase hydrolysis rate. Involved in the addition of a carboxymethylaminomethyl (cmnm) group at the wobble position (U34) of certain tRNAs, forming tRNA-cmnm(5)s(2)U34. This Pseudomonas savastanoi pv. phaseolicola (strain 1448A / Race 6) (Pseudomonas syringae pv. phaseolicola (strain 1448A / Race 6)) protein is tRNA modification GTPase MnmE.